The following is a 442-amino-acid chain: tRNA modification GTPase MnmE (442 aa).

(6S)-5-formyl-5,6,7,8-tetrahydrofolate-binding residues include Arg-27, Glu-84, and Lys-124. Residues 221–366 enclose the TrmE-type G domain; it reads GFQIVILGAP…LMELISQASA (146 aa). Residues 231–236, 250–256, 275–278, and 329–332 each bind GTP; these read NAGKSS, TEEPGTT, DTAG, and NKAD. Ser-235 and Thr-256 together coordinate Mg(2+). Lys-442 is a binding site for (6S)-5-formyl-5,6,7,8-tetrahydrofolate.

This sequence belongs to the TRAFAC class TrmE-Era-EngA-EngB-Septin-like GTPase superfamily. TrmE GTPase family. In terms of assembly, homodimer. Heterotetramer of two MnmE and two MnmG subunits. The cofactor is K(+).

The protein resides in the cytoplasm. Functionally, exhibits a very high intrinsic GTPase hydrolysis rate. Involved in the addition of a carboxymethylaminomethyl (cmnm) group at the wobble position (U34) of certain tRNAs, forming tRNA-cmnm(5)s(2)U34. The chain is tRNA modification GTPase MnmE from Chelativorans sp. (strain BNC1).